Here is a 244-residue protein sequence, read N- to C-terminus: Gas vesicle protein F (244 aa).

The protein belongs to the gas vesicle GvpF/GvpL family. As to quaternary structure, binds GvpA.

It is found in the gas vesicle. Its function is as follows. A minor component of the gas vesicle, may be involved in preventing GvpA aggregation during gas vesicle nucleation. Gas vesicles (GV) are hollow, gas filled proteinaceous nanostructures. During planktonic growth they allow positioning of the organism at a favorable depth for light or nutrient acquisition. Cluster expression in E.coli (gvpA1-gvpA2-gvpC-gvpN-gvpJ-gvpK-gvpF-gvpG-gvpV-gvpW) allows cells to float and produces irregularly shaped gas vesicles. In Nostoc sp. (strain PCC 7120 / SAG 25.82 / UTEX 2576), this protein is Gas vesicle protein F.